Here is a 686-residue protein sequence, read N- to C-terminus: Calponin homology and LIM domain-containing protein (686 aa).

The 106-residue stretch at 15–120 (ELALDESRDW…ITLYWLGRAA (106 aa)) folds into the Calponin-homology (CH) domain. 2 LIM zinc-binding domains span residues 139-200 (MNCS…ATNL) and 219-279 (NKCS…SCGK). A compositionally biased stretch (basic and acidic residues) spans 305–314 (KQVMDKDGHD). The segment at 305–345 (KQVMDKDGHDHHHHNHNKPTTTTTTTNSNSPLAKKKSDSCK) is disordered. Residues 322-333 (KPTTTTTTTNSN) show a composition bias toward low complexity. LIM zinc-binding domains lie at 373 to 435 (GTCG…NNKS), 437 to 495 (KNCH…LNQY), 519 to 579 (DRCV…IQQS), and 583 to 658 (DHCA…ASSS).

In terms of assembly, interacts with limF and rab21.

Its function is as follows. Involved in the regulation of phagocytosis. May repress rab21. The chain is Calponin homology and LIM domain-containing protein (ChLim) from Dictyostelium discoideum (Social amoeba).